Consider the following 449-residue polypeptide: POU domain, class 5, transcription factor 1.1 (449 aa).

Disordered regions lie at residues 79–125 (ENNQ…SPPN) and 170–233 (YPTP…PSES). Positions 97 to 110 (SRIKVKEEVVHETD) are enriched in basic and acidic residues. A compositionally biased stretch (polar residues) spans 170–180 (YPTPANQSPNT). The segment covering 187 to 199 (SSMESSRCSSTNS) has biased composition (low complexity). The span at 224 to 233 (DNEEEVPSES) shows a compositional bias: acidic residues. Residues 227 to 301 (EEVPSESEME…FLERWVVEAE (75 aa)) enclose the POU-specific domain. Residues 321–380 (KRKRRTNIENIVKGTLESYFMKCPKPGAQEMVQIAKELNMDKDVVRVWFCNRRQKGKRQG) constitute a DNA-binding region (homeobox).

Belongs to the POU transcription factor family. Class-5 subfamily. Interacts with components of the transcription complex that assembles on the vent2-B gene, including vent2 (via C-terminus), smad1 and smad4. Forms a repression complex on the promoters of the gsc and mix2 genes via interactions with the nodal/activin signaling pathway transducers foxh1/fast1, gtf2ird1/wbscr11 and smad2. Forms a repression complex on the promoters of the nodal/nr1 and siamois genes with the maternal factors tcf7l1/tcf3 and vegt. As to expression, highly enriched within the animal half of developing embryos within ectodermal and mesodermal regions. Expressed in the neuroectoderm at the early neurula stage, with expression initially extending to the future hindbrain/midbrain boundary, but later shifting toward the posterior pole where it persists within the tip of the tail in hatching embryos. Expressed at very low levels in the adult kidney.

It is found in the nucleus. Its function is as follows. Transcription factor that binds to the octamer motif (5'-ATTTGCAT-3'). Activates transcription when directly bound to the octamer DNA sequence, but can form repression complexes with other proteins at the promoter site to inhibit transcription. Binds to the promoter of the vent2-B gene to activate transcription when in the presence of other BMP signaling factors also bound to the promoter. Inhibits the competence of ectodermal cells to respond to BMP during embryogenesis thereby inhibiting epidermal differentiation and promoting neural induction. Antagonizes the activity of nodal/activin signaling by forming a transcriptional repression complex on the gsc and mix2 gene promoters to inhibit their transcription, and thus maintain the undifferentiated state of embryonic cells to prevent them from differentiating prematurely. Acts maternally to inhibit vegt and beta-catenin-activated gene transcription by forming a transcriptional repression complex on the nodal/nr1 and siamois promoters to inhibit their transcription. This Xenopus laevis (African clawed frog) protein is POU domain, class 5, transcription factor 1.1 (pou5f1.1).